The sequence spans 61 residues: Small ribosomal subunit protein uS14B (61 aa).

Residues cysteine 24, cysteine 27, cysteine 40, and cysteine 43 each contribute to the Zn(2+) site.

It belongs to the universal ribosomal protein uS14 family. Zinc-binding uS14 subfamily. Part of the 30S ribosomal subunit. Contacts proteins S3 and S10. Zn(2+) serves as cofactor.

In terms of biological role, binds 16S rRNA, required for the assembly of 30S particles and may also be responsible for determining the conformation of the 16S rRNA at the A site. In Mycobacterium bovis (strain ATCC BAA-935 / AF2122/97), this protein is Small ribosomal subunit protein uS14B.